Here is a 145-residue protein sequence, read N- to C-terminus: Hemoglobin subunit beta-2 (145 aa).

The Globin domain maps to His-2 to Tyr-145. Heme b is bound by residues His-63 and His-92.

It belongs to the globin family. As to quaternary structure, minor hemoglobin is a tetramer of two alpha-2 chains and two beta-2 chains. Red blood cells.

Functionally, involved in oxygen transport from the lung to the various peripheral tissues. This chain is Hemoglobin subunit beta-2 (HBB2), found in Triturus cristatus (Great crested newt).